Reading from the N-terminus, the 204-residue chain is MTGFSNKAIVIDGRGHLLGRLAAVIAKVLLEGNKVVVVRCEQLNISGNFFRNKLKFMSFLRKRCNVNPARGPFHFRAPSKILWKTVRGMIPHKTERGKDALRRLRSYDGCPPPYDNRRRVVVPAALRVFCLKPGRKYCHVGRLSHEVGWKYREVVRKLEDKRKFKAVHKVAYERKLKKITKDAGAKVSKATAPFTAVIQSYGYN.

Belongs to the universal ribosomal protein uL13 family.

The polypeptide is Large ribosomal subunit protein uL13 (RpL13A) (Choristoneura parallela (Spotted fireworm moth)).